We begin with the raw amino-acid sequence, 49 residues long: Large ribosomal subunit protein bL33 (49 aa).

Belongs to the bacterial ribosomal protein bL33 family.

The chain is Large ribosomal subunit protein bL33 from Alkaliphilus oremlandii (strain OhILAs) (Clostridium oremlandii (strain OhILAs)).